A 367-amino-acid polypeptide reads, in one-letter code: MSKVKGDLEKSDKRPPSSMSTGSADSGVFSSGVHASSPSHSQGSSSQSGPPSPTTQLNSLLFETANLIAVNEQLRKEIAENKQIQTNQMRALRYSSNPVDQPFVANSISPHHGFPQRPPRGERRMQKPESYKTVICQAWLESKTCTFAENCRFAHGEEELRPAKLESRQNNKYKTKLCDKYTTTGLCPYGKRCLFIHPDNQPNAYIRADKLYEVSQRHALADLRDHVESQIMTGNTRNSYNQQPPPMGGLEMQSSPMKSSSDSSHMRSPMAQMNCETTRPHPSWPLESSSFFLPPEMSSINNNNLMSPFETPFPNGSTGIQPHFVTAKRRAAFPPVPSNFQQDDDNMSSIPGFDHLAEDMAKHLELW.

Residues 1-15 (MSKVKGDLEKSDKRP) show a composition bias toward basic and acidic residues. The tract at residues 1–57 (MSKVKGDLEKSDKRPPSSMSTGSADSGVFSSGVHASSPSHSQGSSSQSGPPSPTTQL) is disordered. The span at 30-49 (SSGVHASSPSHSQGSSSQSG) shows a compositional bias: low complexity. Positions 63–92 (ETANLIAVNEQLRKEIAENKQIQTNQMRAL) form a coiled coil. Residues 107–126 (SISPHHGFPQRPPRGERRMQ) form a disordered region. 2 C3H1-type zinc fingers span residues 130-158 (SYKT…HGEE) and 172-200 (KYKT…HPDN). The segment at 235–268 (NTRNSYNQQPPPMGGLEMQSSPMKSSSDSSHMRS) is disordered. Over residues 252 to 268 (MQSSPMKSSSDSSHMRS) the composition is skewed to low complexity.

In terms of tissue distribution, exclusively expressed in the hermaphrodite gonad. Weakly distributed throughout gonadal oocytes from the mitotic stage to the developing diakinesis stage, with expression restricted to the distal region of the gonad.

Functionally, zinc-finger protein that may play a role in oocyte maturation and fertility. The polypeptide is CCCH-type zinc finger protein moe-3 (Caenorhabditis elegans).